A 22-amino-acid chain; its full sequence is Hemocyanin subunit 4 (22 aa).

The protein belongs to the tyrosinase family. Hemocyanin subfamily. As to expression, hemolymph.

It localises to the secreted. The protein resides in the extracellular space. In terms of biological role, hemocyanins are copper-containing oxygen carriers occurring freely dissolved in the hemolymph of many mollusks and arthropods. In Homarus americanus (American lobster), this protein is Hemocyanin subunit 4.